The following is a 154-amino-acid chain: Protein X (154 aa).

The tract at residues 68–117 (PCALRFTSARCMETTVNAHQILPKVLHKRTLGLPAMSTTDLEAYFKDCVF) is mitochondrial targeting sequence.

It belongs to the orthohepadnavirus protein X family. May form homodimer. May interact with host CEBPA, CFLAR, CREB1, DDB1, E4F1, HBXIP, HSPD1/HSP60, NFKBIA, POLR2E and SMAD4. Interacts with host SMC5-SMC6 complex and induces its degradation. Interacts with host TRPC4AP; leading to prevent ubiquitination of TRPC4AP. Interacts with host PLSCR1; this interaction promotes ubiquitination and degradation of HBx and impairs HBx-mediated cell proliferation. In terms of processing, a fraction may be phosphorylated in insect cells and HepG2 cells, a human hepatoblastoma cell line. Phosphorylated in vitro by host protein kinase C or mitogen-activated protein kinase. N-acetylated in insect cells.

The protein resides in the host cytoplasm. It is found in the host nucleus. Its subcellular location is the host mitochondrion. Functionally, multifunctional protein that plays a role in silencing host antiviral defenses and promoting viral transcription. Does not seem to be essential for HBV infection. May be directly involved in development of cirrhosis and liver cancer (hepatocellular carcinoma). Most of cytosolic activities involve modulation of cytosolic calcium. The effect on apoptosis is controversial depending on the cell types in which the studies have been conducted. May induce apoptosis by localizing in mitochondria and causing loss of mitochondrial membrane potential. May also modulate apoptosis by binding host CFLAR, a key regulator of the death-inducing signaling complex (DISC). Promotes viral transcription by using the host E3 ubiquitin ligase DDB1 to target the SMC5-SMC6 complex to proteasomal degradation. This host complex would otherwise bind to viral episomal DNA, and prevents its transcription. Moderately stimulates transcription of many different viral and cellular transcription elements. Promoters and enhancers stimulated by HBx contain DNA binding sites for NF-kappa-B, AP-1, AP-2, c-EBP, ATF/CREB, or the calcium-activated factor NF-AT. This is Protein X from Homo sapiens (Human).